The primary structure comprises 509 residues: tRNA-2-methylthio-N(6)-dimethylallyladenosine synthase (509 aa).

Residues 1 to 13 (MNEQQRLASQQAN) are compositionally biased toward polar residues. Residues 1 to 26 (MNEQQRLASQQANSSKKKEEKDYSKY) form a disordered region. Residues 16–25 (KKKEEKDYSK) show a composition bias toward basic and acidic residues. In terms of domain architecture, MTTase N-terminal spans 66–184 (RKFYIRTYGC…LPYILKDAMF (119 aa)). Residues C75, C111, C145, C221, C225, and C228 each contribute to the [4Fe-4S] cluster site. A Radical SAM core domain is found at 207–437 (RRGDIKAWVN…NALVNKLAIE (231 aa)). The region spanning 440 to 503 (NRYKGQIVEV…TWSLNGELVE (64 aa)) is the TRAM domain.

Belongs to the methylthiotransferase family. MiaB subfamily. Monomer. It depends on [4Fe-4S] cluster as a cofactor.

It is found in the cytoplasm. It catalyses the reaction N(6)-dimethylallyladenosine(37) in tRNA + (sulfur carrier)-SH + AH2 + 2 S-adenosyl-L-methionine = 2-methylsulfanyl-N(6)-dimethylallyladenosine(37) in tRNA + (sulfur carrier)-H + 5'-deoxyadenosine + L-methionine + A + S-adenosyl-L-homocysteine + 2 H(+). Its function is as follows. Catalyzes the methylthiolation of N6-(dimethylallyl)adenosine (i(6)A), leading to the formation of 2-methylthio-N6-(dimethylallyl)adenosine (ms(2)i(6)A) at position 37 in tRNAs that read codons beginning with uridine. The chain is tRNA-2-methylthio-N(6)-dimethylallyladenosine synthase from Bacillus cereus (strain ATCC 10987 / NRS 248).